Reading from the N-terminus, the 642-residue chain is Chaperone protein DnaK (642 aa).

Position 198 is a phosphothreonine; by autocatalysis (Thr-198). The interval 602–642 (AYAKMTEKQQSDDGAGTQNADHKEDDVVDADFEEVKSDKKD) is disordered.

Belongs to the heat shock protein 70 family.

Acts as a chaperone. The polypeptide is Chaperone protein DnaK (Dichelobacter nodosus (strain VCS1703A)).